The following is a 277-amino-acid chain: Xyloglucan endotransglucosylase/hydrolase protein 19 (277 aa).

The first 21 residues, 1–21, serve as a signal peptide directing secretion; it reads MKSFTFLILFLFAAQSISVYA. The 192-residue stretch at 22-213 folds into the GH16 domain; the sequence is GSFHKDVKIH…WSKAPFTAYY (192 aa). The Nucleophile role is filled by E99. Catalysis depends on E103, which acts as the Proton donor. E103 is a binding site for xyloglucan. N107 is a glycosylation site (N-linked (GlcNAc...) asparagine). Xyloglucan-binding positions include 116–118, 126–128, 192–193, and G197; these read HTN, DKE, and HW. Cystine bridges form between C221-C230 and C262-C276. R267 serves as a coordination point for xyloglucan.

Belongs to the glycosyl hydrolase 16 family. XTH group 2 subfamily. Post-translationally, contains at least one intrachain disulfide bond essential for its enzymatic activity. In terms of tissue distribution, root specific.

The protein resides in the secreted. Its subcellular location is the cell wall. It is found in the extracellular space. The protein localises to the apoplast. The catalysed reaction is breaks a beta-(1-&gt;4) bond in the backbone of a xyloglucan and transfers the xyloglucanyl segment on to O-4 of the non-reducing terminal glucose residue of an acceptor, which can be a xyloglucan or an oligosaccharide of xyloglucan.. Functionally, possesses xyloglucan endotransglucosylase (XET) activity in vitro. Does not possess xyloglucan endohydrolysis (XEH) activity. Cleaves and religates xyloglucan polymers, an essential constituent of the primary cell wall, and thereby participates in cell wall construction of growing tissues. Involved in cell proliferation in the tissue reunion process of wounded inflorescence stems. Maybe a downstream target of NAC071 as a consequence of auxin action in wounded stems. In Arabidopsis thaliana (Mouse-ear cress), this protein is Xyloglucan endotransglucosylase/hydrolase protein 19.